Consider the following 334-residue polypeptide: Ribosomal lysine N-methyltransferase 5 (334 aa).

S-adenosyl-L-methionine-binding positions include Trp-88, 155–157 (GAG), Asp-177, Trp-227, and Met-254.

It belongs to the class I-like SAM-binding methyltransferase superfamily. RKM5 family.

Functionally, S-adenosyl-L-methionine-dependent protein-lysine N-methyltransferase that methylates 60S ribosomal protein L1. This is Ribosomal lysine N-methyltransferase 5 (RKM5) from Lachancea thermotolerans (strain ATCC 56472 / CBS 6340 / NRRL Y-8284) (Yeast).